A 688-amino-acid polypeptide reads, in one-letter code: Homoaconitase, mitochondrial (688 aa).

[4Fe-4S] cluster is bound by residues Cys335, Cys395, and Cys398. The segment at 468–494 (SIDLPKSSGNTGATSEEPISEDDTSEA) is disordered.

It belongs to the aconitase/IPM isomerase family. It depends on [4Fe-4S] cluster as a cofactor.

The protein localises to the mitochondrion. The catalysed reaction is (2R,3S)-homoisocitrate = cis-homoaconitate + H2O. It participates in amino-acid biosynthesis; L-lysine biosynthesis via AAA pathway; L-alpha-aminoadipate from 2-oxoglutarate: step 3/5. Its function is as follows. Catalyzes the reversible hydration of cis-homoaconitate to (2R,3S)-homoisocitrate, a step in the alpha-aminoadipate pathway for lysine biosynthesis. In Candida parapsilosis (Yeast), this protein is Homoaconitase, mitochondrial (LYS4).